The chain runs to 347 residues: Protein RecA (347 aa).

An ATP-binding site is contributed by 67–74 (GPESSGKT).

This sequence belongs to the RecA family.

The protein localises to the cytoplasm. Functionally, can catalyze the hydrolysis of ATP in the presence of single-stranded DNA, the ATP-dependent uptake of single-stranded DNA by duplex DNA, and the ATP-dependent hybridization of homologous single-stranded DNAs. It interacts with LexA causing its activation and leading to its autocatalytic cleavage. The chain is Protein RecA from Paenarthrobacter aurescens (strain TC1).